We begin with the raw amino-acid sequence, 120 residues long: Large ribosomal subunit protein uL18 (120 aa).

It belongs to the universal ribosomal protein uL18 family. Part of the 50S ribosomal subunit; part of the 5S rRNA/L5/L18/L25 subcomplex. Contacts the 5S and 23S rRNAs.

In terms of biological role, this is one of the proteins that bind and probably mediate the attachment of the 5S RNA into the large ribosomal subunit, where it forms part of the central protuberance. The protein is Large ribosomal subunit protein uL18 of Geobacillus thermodenitrificans (strain NG80-2).